The following is a 105-amino-acid chain: SH3 domain-binding glutamic acid-rich-like protein 2 (105 aa).

The SH3-binding signature appears at 61-67 (KGNPLPP).

This sequence belongs to the SH3BGR family.

The protein resides in the nucleus. This is SH3 domain-binding glutamic acid-rich-like protein 2 (sh3bgrl2) from Danio rerio (Zebrafish).